The following is a 180-amino-acid chain: Shikimate kinase (180 aa).

ATP is bound at residue 14-19 (GAGKSC). Ser-18 contributes to the Mg(2+) binding site. Residues Asp-36, Arg-60, and Gly-82 each coordinate substrate. ATP is bound at residue Arg-120. Residue Arg-139 coordinates substrate.

It belongs to the shikimate kinase family. In terms of assembly, monomer. Mg(2+) serves as cofactor.

It is found in the cytoplasm. It carries out the reaction shikimate + ATP = 3-phosphoshikimate + ADP + H(+). It participates in metabolic intermediate biosynthesis; chorismate biosynthesis; chorismate from D-erythrose 4-phosphate and phosphoenolpyruvate: step 5/7. Catalyzes the specific phosphorylation of the 3-hydroxyl group of shikimic acid using ATP as a cosubstrate. This chain is Shikimate kinase, found in Xanthomonas euvesicatoria pv. vesicatoria (strain 85-10) (Xanthomonas campestris pv. vesicatoria).